We begin with the raw amino-acid sequence, 197 residues long: MLQHAPTLTRLVGELKKLPGIGERTALRLAFHLLKSPQNLGSLAEALTQVQERVCACSVCFALTEQNPCPICSGGRDSSVICVVETSQDMLALERSNAYHGSYHVLQGAISPLHGVNPDDLRIRELLMRIEQGKVEEVVIATNFTVEGETTALYLARQLKPLGIRVTRLAHGIPLGSDIEFVDPATVQWAMKGRSEL.

The C4-type zinc-finger motif lies at 57-72 (CSVCFALTEQNPCPIC). One can recognise a Toprim domain in the interval 79–174 (SVICVVETSQ…RVTRLAHGIP (96 aa)).

It belongs to the RecR family.

In terms of biological role, may play a role in DNA repair. It seems to be involved in an RecBC-independent recombinational process of DNA repair. It may act with RecF and RecO. The polypeptide is Recombination protein RecR (Trichlorobacter lovleyi (strain ATCC BAA-1151 / DSM 17278 / SZ) (Geobacter lovleyi)).